The sequence spans 368 residues: Chaperone protein DnaJ (368 aa).

Positions 5–69 (DYYEVLGLSQ…QKRAQYDQFG (65 aa)) constitute a J domain. A CR-type zinc finger spans residues 130–212 (GKELNVEIPV…CHGSGKVRKR (83 aa)). Cys143, Cys146, Cys160, Cys163, Cys186, Cys189, Cys200, and Cys203 together coordinate Zn(2+). CXXCXGXG motif repeat units follow at residues 143-150 (CDTCKGSG), 160-167 (CKHCSGSG), 186-193 (CGHCSGTG), and 200-207 (CTTCHGSG).

This sequence belongs to the DnaJ family. In terms of assembly, homodimer. Zn(2+) is required as a cofactor.

It localises to the cytoplasm. Participates actively in the response to hyperosmotic and heat shock by preventing the aggregation of stress-denatured proteins and by disaggregating proteins, also in an autonomous, DnaK-independent fashion. Unfolded proteins bind initially to DnaJ; upon interaction with the DnaJ-bound protein, DnaK hydrolyzes its bound ATP, resulting in the formation of a stable complex. GrpE releases ADP from DnaK; ATP binding to DnaK triggers the release of the substrate protein, thus completing the reaction cycle. Several rounds of ATP-dependent interactions between DnaJ, DnaK and GrpE are required for fully efficient folding. Also involved, together with DnaK and GrpE, in the DNA replication of plasmids through activation of initiation proteins. This chain is Chaperone protein DnaJ, found in Bacillus mycoides (strain KBAB4) (Bacillus weihenstephanensis).